Here is a 43-residue protein sequence, read N- to C-terminus: S-layer protein 1 (43 aa).

The protein resides in the secreted. It is found in the cell wall. The protein localises to the S-layer. Functionally, the S-layer is a paracrystalline mono-layered assembly of proteins which coat the surface of bacteria. The chain is S-layer protein 1 from Bacillus thuringiensis subsp. konkukian.